The sequence spans 486 residues: Keratin-3, type I cytoskeletal 51 kDa (486 aa).

Residues 1 to 125 (MSNYSIKQSA…AGGMDIFSTN (125 aa)) are head. A coil 1A region spans residues 126–161 (EKQTMQNLNDRLASYLDKVHALETANTELERKIKEW). Residues 126–442 (EKQTMQNLND…RLLDGDLSKP (317 aa)) form the IF rod domain. Residues 162–184 (YEKQRPGSSSGDGAKDYSKYYTM) form a linker 1 region. Residues 185-276 (INDLKNQIIA…KNHEDELKGM (92 aa)) form a coil 1B region. The segment at 277-299 (QVTQVGQVNVEMNAAPSSDLTKI) is linker 12. The segment at 300–438 (LNDMRSQYED…ETYRRLLDGD (139 aa)) is coil 2. The disordered stretch occupies residues 435 to 466 (LDGDLSKPKSGGGTSTNTGSTSSKGSTRTVKR). The segment at 439–486 (LSKPKSGGGTSTNTGSTSSKGSTRTVKRREIIEEVVDGKVVSTKVVDM) is tail. Residues 449-461 (STNTGSTSSKGST) are compositionally biased toward low complexity.

The protein belongs to the intermediate filament family. In terms of assembly, heterotetramer of two type I and two type II keratins.

The chain is Keratin-3, type I cytoskeletal 51 kDa from Xenopus laevis (African clawed frog).